The sequence spans 175 residues: SsrA-binding protein (175 aa).

The protein belongs to the SmpB family.

Its subcellular location is the cytoplasm. Required for rescue of stalled ribosomes mediated by trans-translation. Binds to transfer-messenger RNA (tmRNA), required for stable association of tmRNA with ribosomes. tmRNA and SmpB together mimic tRNA shape, replacing the anticodon stem-loop with SmpB. tmRNA is encoded by the ssrA gene; the 2 termini fold to resemble tRNA(Ala) and it encodes a 'tag peptide', a short internal open reading frame. During trans-translation Ala-aminoacylated tmRNA acts like a tRNA, entering the A-site of stalled ribosomes, displacing the stalled mRNA. The ribosome then switches to translate the ORF on the tmRNA; the nascent peptide is terminated with the 'tag peptide' encoded by the tmRNA and targeted for degradation. The ribosome is freed to recommence translation, which seems to be the essential function of trans-translation. This chain is SsrA-binding protein, found in Prochlorococcus marinus subsp. pastoris (strain CCMP1986 / NIES-2087 / MED4).